The primary structure comprises 473 residues: Xylosidase/arabinosidase (473 aa).

The active-site Proton acceptor is Asp18. Glu209 (proton donor) is an active-site residue.

It belongs to the glycosyl hydrolase 43 family. In terms of assembly, homotetramer.

The catalysed reaction is Hydrolysis of (1-&gt;4)-beta-D-xylans, to remove successive D-xylose residues from the non-reducing termini.. It catalyses the reaction Hydrolysis of terminal non-reducing alpha-L-arabinofuranoside residues in alpha-L-arabinosides.. This chain is Xylosidase/arabinosidase (xylA), found in Thermoclostridium stercorarium (Clostridium stercorarium).